The chain runs to 435 residues: Tumor necrosis factor receptor superfamily member 3 (435 aa).

Residues M1 to P30 form the signal peptide. Residues Q31–M227 are Extracellular-facing. N-linked (GlcNAc...) asparagine glycosylation is present at N40. TNFR-Cys repeat units follow at residues T42–A81, T82–C124, R125–V168, and P169–K211. Intrachain disulfides connect C43/C58, C59/C72, C62/C80, C83/C98, C101/C116, C104/C124, C126/C132, C139/C148, C142/C167, and C170/C185. N177 carries N-linked (GlcNAc...) asparagine glycosylation. Residues L228–W248 form a helical membrane-spanning segment. Residues K249–D435 are Cytoplasmic-facing. Position 323 is a phosphoserine (S323). Residues P373–L399 show a composition bias toward pro residues. The tract at residues P373–D435 is disordered. Positions H403–H417 are enriched in basic and acidic residues. Over residues T421–D435 the composition is skewed to polar residues.

In terms of assembly, self-associates; dimerization and trimerization are promoted by lymphotoxin (LTA(1)-LTB(2)). Associates with TRAF3. Associates with TRAF4. Associates with TRAF5. Interacts with Aedes aegypti lymphotoxin beta receptor inhibitor; the interaction reduces dimerization and trimerization of LTBR induced by lymphotoxin (LTA(1)-LTB(2)). (Microbial infection) Interacts with HCV core protein.

Its subcellular location is the membrane. Functionally, receptor for the heterotrimeric lymphotoxin containing LTA and LTB, and for TNFS14/LIGHT. Activates NF-kappa-B signaling pathway upon stimulation with lymphotoxin (LTA(1)-LTB(2)). Promotes apoptosis via TRAF3 and TRAF5. May play a role in the development of lymphoid organs. The protein is Tumor necrosis factor receptor superfamily member 3 (LTBR) of Homo sapiens (Human).